Consider the following 74-residue polypeptide: UPF0741 protein BcerKBAB4_5177 (74 aa).

It belongs to the UPF0741 family.

This chain is UPF0741 protein BcerKBAB4_5177, found in Bacillus mycoides (strain KBAB4) (Bacillus weihenstephanensis).